The following is a 210-amino-acid chain: MMKANFIVVEGLEGAGKSTAIKTVLDTLKAAGIENIVNTREPGGTPLAEKMRGLVKEEHEGEDLKDMTELLLLYAARVQLVENVIKPALANDQWVVGDRHDLSSQAYQGGGRQIDASLMKNLRDTTLGEFKPAFTLYMDIDPRVGLERARGRGELDRIEKMDISFFERTRERYLELANADDSIVIINAEQSIEDVAQDIKAALNKWLAAQ.

Residue 11-18 (GLEGAGKS) coordinates ATP.

The protein belongs to the thymidylate kinase family.

It catalyses the reaction dTMP + ATP = dTDP + ADP. Its function is as follows. Phosphorylation of dTMP to form dTDP in both de novo and salvage pathways of dTTP synthesis. The polypeptide is Thymidylate kinase (Vibrio campbellii (strain ATCC BAA-1116)).